The following is a 134-amino-acid chain: MAEQSDKAVKYYTLEEIQKHNNSKSTWLILHHKVYDLTKFLEEHPGGEEVLREQAGGDATENFEDVGHSTDARELSKTFIIGELHPDDRSKIAKPSETLITTVESNSSWWTNWVIPAISALVVSLMYHFYTSEN.

A2 is subject to N-acetylalanine. N6-acetyllysine occurs at positions 7, 10, and 19. In terms of domain architecture, Cytochrome b5 heme-binding spans 9 to 85; that stretch reads VKYYTLEEIQ…SKTFIIGELH (77 aa). 2 residues coordinate heme: H44 and H68. Residues 109–131 traverse the membrane as a helical segment; it reads WWTNWVIPAISALVVSLMYHFYT.

This sequence belongs to the cytochrome b5 family.

Its subcellular location is the endoplasmic reticulum membrane. It localises to the microsome membrane. It is found in the cytoplasm. In terms of biological role, cytochrome b5 is a membrane-bound hemoprotein functioning as an electron carrier for several membrane-bound oxygenases. The chain is Cytochrome b5 (CYB5A) from Sus scrofa (Pig).